The sequence spans 293 residues: Serine/threonine-protein phosphatase 2A catalytic subunit beta isoform (293 aa).

Aspartate 41, histidine 43, aspartate 69, and asparagine 101 together coordinate Mn(2+). Histidine 102 serves as the catalytic Proton donor. Mn(2+) is bound by residues histidine 151 and histidine 225. Residue tyrosine 291 is modified to Phosphotyrosine. Leucine 293 bears the Leucine methyl ester mark.

This sequence belongs to the PPP phosphatase family. PP-1 subfamily. In terms of assembly, found in a complex with at least ARL2, PPP2CB, PPP2R1A, PPP2R2A, PPP2R5E and TBCD. Interacts with TBCD. PP2A consists of a common heterodimeric core enzyme (composed of a 36 kDa catalytic subunit (subunit C) and a 65 kDa constant regulatory subunit (PR65) (subunit A)) that associates with a variety of regulatory subunits. Proteins that associate with the core dimer include three families of regulatory subunits B (the R2/B/PR55/B55, R3/B''/PR72/PR130/PR59 and R5/B'/B56 families), the 48 kDa variable regulatory subunit, viral proteins, and cell signaling molecules. Binds PPME1. May indirectly interact with SGO1, most probably through regulatory B56 subunits. Interacts with CTTNBP2NL. Interacts with PTPA. Part of the core of STRIPAK complexes composed of PP2A catalytic and scaffolding subunits, the striatins (PP2A regulatory subunits), the striatin-associated proteins MOB4, STRIP1 and STRIP2, PDCD10 and members of the STE20 kinases, such as STK24 and STK26. The cofactor is Mn(2+). Reversibly methyl esterified on Leu-293 by leucine carboxyl methyltransferase 1 (Lcmt1) and protein phosphatase methylesterase 1 (PPME1). Carboxyl methylation influences the affinity of the catalytic subunit for the different regulatory subunits, thereby modulating the PP2A holoenzyme's substrate specificity, enzyme activity and cellular localization. Post-translationally, phosphorylation of either threonine (by autophosphorylation-activated protein kinase) or tyrosine results in inactivation of the phosphatase. Auto-dephosphorylation has been suggested as a mechanism for reactivation. In terms of processing, may be monoubiquitinated by NOSIP.

It is found in the cytoplasm. Its subcellular location is the nucleus. The protein localises to the chromosome. The protein resides in the centromere. It localises to the cytoskeleton. It is found in the spindle pole. It catalyses the reaction O-phospho-L-seryl-[protein] + H2O = L-seryl-[protein] + phosphate. The catalysed reaction is O-phospho-L-threonyl-[protein] + H2O = L-threonyl-[protein] + phosphate. In terms of biological role, catalytic subunit of protein phosphatase 2A (PP2A), a serine/threonine phosphatase involved in the regulation of a wide variety of enzymes, signal transduction pathways, and cellular events. PP2A can modulate the activity of phosphorylase B kinase, casein kinase 2, mitogen-stimulated S6 kinase, and MAP-2 kinase. Part of the striatin-interacting phosphatase and kinase (STRIPAK) complexes. STRIPAK complexes have critical roles in protein (de)phosphorylation and are regulators of multiple signaling pathways including Hippo, MAPK, nuclear receptor and cytoskeleton remodeling. Different types of STRIPAK complexes are involved in a variety of biological processes such as cell growth, differentiation, apoptosis, metabolism and immune regulation. The protein is Serine/threonine-protein phosphatase 2A catalytic subunit beta isoform (PPP2CB) of Sus scrofa (Pig).